Here is a 154-residue protein sequence, read N- to C-terminus: Endoribonuclease YbeY (154 aa).

Zn(2+) contacts are provided by His113, His117, and His123.

Belongs to the endoribonuclease YbeY family. Requires Zn(2+) as cofactor.

The protein localises to the cytoplasm. Functionally, single strand-specific metallo-endoribonuclease involved in late-stage 70S ribosome quality control and in maturation of the 3' terminus of the 16S rRNA. The sequence is that of Endoribonuclease YbeY from Vibrio campbellii (strain ATCC BAA-1116).